A 66-amino-acid chain; its full sequence is Omega conotoxin-CVIE (66 aa).

The N-terminal stretch at 1–17 is a signal peptide; sequence VVIVAVLLLTACQLITA. The propeptide occupies 18–40; sequence NDSRGTQKHRALRSDTKLSMSTR. 3 cysteine pairs are disulfide-bonded: Cys-41-Cys-56, Cys-48-Cys-60, and Cys-55-Cys-65. Cys-65 carries the post-translational modification Cysteine amide.

The protein belongs to the conotoxin O1 superfamily. As to expression, expressed by the venom duct.

Its subcellular location is the secreted. Omega-conotoxins act at presynaptic membranes, they bind and block voltage-gated calcium channels. This toxin blocks N-type calcium channels (Cav2.2/CACNA1B). It shows a higher potency when Cav2.2/CACNA1B is only expressed with the ancillary subunit CACNB3 (IC(50)=0.12 nM) than on Cav2.2/CACNA1B expressed with the ancillary subunits CACNA2D1 and CACNB3 (IC(50)=2.6 nM). The Cav2.2/CACNA1B block by this toxin is voltage-independent, whereas the recovery from toxin block is voltage-dependent. There is a low recovery at physiological membrane potential and a high recovery with hyperpolarized potential. This indicates that the toxin has a higher affinity for Cav2.2/CACNA1B in the inactivated state. It is noteworthy that ancillary subunits beta modulate recovery from this toxin block. Cav2.2/CACNA1B expressed with the ancillary subunit CACNB2a (isoform 2a) almost recover completely from this toxin block, whereas Cav2.2/CACNA1B expressed with CACNB3 exhibits relatively weak recovery. Inhibition by this toxin of excitatory synaptic transmission is reversible. In vivo, when tested on rat model of persistent pain, this toxin blocks chronic pain behavior. This is Omega conotoxin-CVIE from Conus catus (Cat cone).